Consider the following 291-residue polypeptide: Phycobilisome 32.1 kDa linker polypeptide, phycocyanin-associated, rod 1 (291 aa).

A PBS-linker domain is found at 2–179 (AITTAASRLG…LYRGYANSDR (178 aa)). The region spanning 236-288 (SKLFRVEITAISAPGYPKVRRSNKAVIVPFEQLNQTLQQINRLGGKVASITPA) is the CpcD-like domain.

This sequence belongs to the phycobilisome linker protein family. Part of 2 PBS rod complexes, the conventional CpcG-PBS rod and a photosystem I-specific CpcL-PBS rod, both of which include ferredoxin--NADP reductase (petH). CpcG-PBS has on average 3 stacked phycocyanin hexamers (PC, CpcA and CpcB). Linker CpcG connects the PC stack to the thylakoid, the hexamers are linked by 1 copy of CpcC1, 1 copy of CpcC2 and the stack is terminated by a single copy of CpcD. The CpcL-PBS has on average 5 stacked phycocyanin hexamers (PC, CpcA and CpcB). Linker CpcL connects the PC stack to the thylakoid, the hexamers are linked by 1 copy of CpcC1, 3 copies of CpcC2 and the stack is terminated by a single copy of CpcD.

The protein resides in the cellular thylakoid membrane. Functionally, rod linker protein, connecting hexameric phycocyanin (PC, made by cpcA and cpcB) rods in the phycobilisome (PBS). PC is the major phycobiliprotein in PBS rods. Linker polypeptides determine the state of aggregation and the location of the disk-shaped phycobiliprotein units within the phycobilisome and modulate their spectroscopic properties in order to mediate a directed and optimal energy transfer. The polypeptide is Phycobilisome 32.1 kDa linker polypeptide, phycocyanin-associated, rod 1 (cpcC1) (Synechocystis sp. (strain ATCC 27184 / PCC 6803 / Kazusa)).